The following is a 315-amino-acid chain: Solute carrier family 25 member 32 (315 aa).

Solcar repeat units lie at residues 20–109, 118–209, and 222–306; these read HVRY…IKSY, LEAT…LKLK, and LSTV…VSHF. A run of 6 helical transmembrane segments spans residues 26-43, 89-106, 123-143, 186-203, 227-243, and 281-300; these read LIAG…LHPL, IWGA…YNAI, YLVS…PLWV, FVPG…FMAY, YISV…AATY, and GIAP…FVVY.

Belongs to the mitochondrial carrier (TC 2.A.29) family. As to expression, ubiquitous.

The protein resides in the mitochondrion inner membrane. The catalysed reaction is FAD(in) = FAD(out). Its function is as follows. Facilitates flavin adenine dinucleotide (FAD) translocation across the mitochondrial inner membrane into the mitochondrial matrix where it acts as a redox cofactor to assist flavoenzyme activities in fundamental metabolic processes including fatty acid beta-oxidation, amino acid and choline metabolism as well as mitochondrial electron transportation. In particular, provides FAD to DLD dehydrogenase of the glycine cleavage system, part of mitochondrial one-carbon metabolic pathway involved in neural tube closure in early embryogenesis. The chain is Solute carrier family 25 member 32 from Homo sapiens (Human).